The sequence spans 208 residues: Protein-L-isoaspartate O-methyltransferase (208 aa).

Residue Ser-59 is part of the active site.

It belongs to the methyltransferase superfamily. L-isoaspartyl/D-aspartyl protein methyltransferase family.

Its subcellular location is the cytoplasm. It carries out the reaction [protein]-L-isoaspartate + S-adenosyl-L-methionine = [protein]-L-isoaspartate alpha-methyl ester + S-adenosyl-L-homocysteine. In terms of biological role, catalyzes the methyl esterification of L-isoaspartyl residues in peptides and proteins that result from spontaneous decomposition of normal L-aspartyl and L-asparaginyl residues. It plays a role in the repair and/or degradation of damaged proteins. This chain is Protein-L-isoaspartate O-methyltransferase, found in Salmonella newport (strain SL254).